The chain runs to 1448 residues: Murinoglobulin-2 (1448 aa).

The N-terminal stretch at 1 to 24 (MWKNREAQLCLFSVLLAFLPSASL) is a signal peptide. 3 disulfide bridges follow: cysteine 48–cysteine 86, cysteine 245–cysteine 277, and cysteine 263–cysteine 289. Residue asparagine 55 is glycosylated (N-linked (GlcNAc...) asparagine). N-linked (GlcNAc...) asparagine glycans are attached at residues asparagine 295, asparagine 315, asparagine 387, and asparagine 502. Disulfide bonds link cysteine 462–cysteine 556, cysteine 588–cysteine 748, and cysteine 636–cysteine 681. A bait region region spans residues 678–709 (PTYCYDLPKEPPRKDPPRKDPEPKDTVVETIR). N-linked (GlcNAc...) asparagine glycans are attached at residues asparagine 751 and asparagine 846. Intrachain disulfides connect cysteine 824/cysteine 860, cysteine 898/cysteine 1295, cysteine 1056/cysteine 1101, and cysteine 1326/cysteine 1441. The segment at residues 949–952 (CGEQ) is a cross-link (isoglutamyl cysteine thioester (Cys-Gln)). N-linked (GlcNAc...) asparagine glycosylation occurs at asparagine 968. 3 N-linked (GlcNAc...) asparagine glycosylation sites follow: asparagine 1114, asparagine 1285, and asparagine 1398.

This sequence belongs to the protease inhibitor I39 (alpha-2-macroglobulin) family. As to quaternary structure, monomer.

It localises to the secreted. Its function is as follows. A proteinase activates the inhibitor by specific proteolysis in the bait region, which, by an unknown mechanism leads to reaction at the cysteinyl-glutamyl internal thiol ester site and to a conformational change, whereby the proteinase is trapped and/or covalently bound to the inhibitor. While in the tetrameric proteinase inhibitors steric inhibition is sufficiently strong, monomeric forms need a covalent linkage between the activated glutamyl residue of the original thiol ester and a terminal amino group of a lysine or another nucleophilic group on the proteinase, for inhibition to be effective. This chain is Murinoglobulin-2, found in Rattus norvegicus (Rat).